Consider the following 534-residue polypeptide: NEDD8-activating enzyme E1 regulatory subunit (534 aa).

Position 2 is an N-acetylalanine (alanine 2). Residues lysine 6 and lysine 341 each carry the N6-acetyllysine modification. The segment at 331 to 344 is interaction with UBA3; that stretch reads DMIADSGKYIKLQN.

The protein belongs to the ubiquitin-activating E1 family. ULA1 subfamily. In terms of assembly, heterodimer of UBA3 and NAE1. The complex binds NEDD8 and UBE2M. Binds APP and TP53BP2. Ubiquitinated by TRIP12, leading to its degradation by the proteasome. In terms of tissue distribution, ubiquitous in fetal tissues. Expressed throughout the adult brain.

It is found in the cell membrane. Its pathway is protein modification; protein neddylation. Binding of TP53BP2 to the regulatory subunit NAE1 decreases neddylation activity. Its function is as follows. Regulatory subunit of the dimeric UBA3-NAE1 E1 enzyme. E1 activates NEDD8 by first adenylating its C-terminal glycine residue with ATP, thereafter linking this residue to the side chain of the catalytic cysteine, yielding a NEDD8-UBA3 thioester and free AMP. E1 finally transfers NEDD8 to the catalytic cysteine of UBE2M. Necessary for cell cycle progression through the S-M checkpoint. Overexpression of NAE1 causes apoptosis through deregulation of NEDD8 conjugation. The covalent attachment of NEDD8 to target proteins is known as 'neddylation' and the process is involved in the regulation of cell growth, viability and development. The chain is NEDD8-activating enzyme E1 regulatory subunit (NAE1) from Homo sapiens (Human).